We begin with the raw amino-acid sequence, 608 residues long: UvrABC system protein C (608 aa).

The 79-residue stretch at 13–91 folds into the GIY-YIG domain; sequence HDPGVYRMFD…IKTFQPRYNV (79 aa). Residues 201–236 form the UVR domain; it reads QQVLDHLIGKMERASRALNFEEAARYRDQIQAVRSV.

It belongs to the UvrC family. As to quaternary structure, interacts with UvrB in an incision complex.

Its subcellular location is the cytoplasm. In terms of biological role, the UvrABC repair system catalyzes the recognition and processing of DNA lesions. UvrC both incises the 5' and 3' sides of the lesion. The N-terminal half is responsible for the 3' incision and the C-terminal half is responsible for the 5' incision. This chain is UvrABC system protein C, found in Mannheimia succiniciproducens (strain KCTC 0769BP / MBEL55E).